A 529-amino-acid chain; its full sequence is Bifunctional purine biosynthesis protein PurH (529 aa).

The MGS-like domain maps to M1–V148.

This sequence belongs to the PurH family.

It carries out the reaction (6R)-10-formyltetrahydrofolate + 5-amino-1-(5-phospho-beta-D-ribosyl)imidazole-4-carboxamide = 5-formamido-1-(5-phospho-D-ribosyl)imidazole-4-carboxamide + (6S)-5,6,7,8-tetrahydrofolate. The catalysed reaction is IMP + H2O = 5-formamido-1-(5-phospho-D-ribosyl)imidazole-4-carboxamide. It participates in purine metabolism; IMP biosynthesis via de novo pathway; 5-formamido-1-(5-phospho-D-ribosyl)imidazole-4-carboxamide from 5-amino-1-(5-phospho-D-ribosyl)imidazole-4-carboxamide (10-formyl THF route): step 1/1. It functions in the pathway purine metabolism; IMP biosynthesis via de novo pathway; IMP from 5-formamido-1-(5-phospho-D-ribosyl)imidazole-4-carboxamide: step 1/1. The protein is Bifunctional purine biosynthesis protein PurH of Salmonella paratyphi A (strain ATCC 9150 / SARB42).